A 234-amino-acid chain; its full sequence is Leucyl/phenylalanyl-tRNA--protein transferase (234 aa).

The protein belongs to the L/F-transferase family.

It is found in the cytoplasm. The catalysed reaction is N-terminal L-lysyl-[protein] + L-leucyl-tRNA(Leu) = N-terminal L-leucyl-L-lysyl-[protein] + tRNA(Leu) + H(+). The enzyme catalyses N-terminal L-arginyl-[protein] + L-leucyl-tRNA(Leu) = N-terminal L-leucyl-L-arginyl-[protein] + tRNA(Leu) + H(+). It catalyses the reaction L-phenylalanyl-tRNA(Phe) + an N-terminal L-alpha-aminoacyl-[protein] = an N-terminal L-phenylalanyl-L-alpha-aminoacyl-[protein] + tRNA(Phe). In terms of biological role, functions in the N-end rule pathway of protein degradation where it conjugates Leu, Phe and, less efficiently, Met from aminoacyl-tRNAs to the N-termini of proteins containing an N-terminal arginine or lysine. The chain is Leucyl/phenylalanyl-tRNA--protein transferase from Escherichia fergusonii (strain ATCC 35469 / DSM 13698 / CCUG 18766 / IAM 14443 / JCM 21226 / LMG 7866 / NBRC 102419 / NCTC 12128 / CDC 0568-73).